The chain runs to 299 residues: Peroxisomal biogenesis factor 19 (299 aa).

Residues 1-63 (MAAAEEGCDA…SPGDTAKDAL (63 aa)) form a disordered region. Ala2 is modified (N-acetylalanine). Residues 2 to 56 (AAAEEGCDAGVEADRELEELLESALDDFDKAKPSPAPPPTTSAPDASGPQKKSPG) are docking to the peroxisome membrane and binding to PEX3. Positions 2–91 (AAAEEGCDAG…QATAEFEKAM (90 aa)) are necessary for PEX19 function on peroxisome biogenesis. Residues 16 to 27 (RELEELLESALD) are compositionally biased toward acidic residues. Phosphoserine is present on residues Ser35, Ser54, and Ser66. Thr236 carries the phosphothreonine modification. A Cysteine methyl ester modification is found at Cys296. Cys296 carries the S-farnesyl cysteine lipid modification. A propeptide spans 297–299 (LIM) (removed in mature form).

Belongs to the peroxin-19 family. In terms of assembly, interacts with a broad range of peroxisomal membrane proteins, including PEX3, PEX10, PEX11A, PEX11B, PEX12, PEX13, PEX14 and PEX16, PXMP2/PMP22, PXMP4/PMP24, SLC25A17/PMP34, ABCD1/ALDP, ABCD2/ALDRP, and ABCD3/PMP70. Also interacts with the tumor suppressor CDKN2A/p19ARF. In terms of tissue distribution, ubiquitous.

Its subcellular location is the cytoplasm. The protein resides in the peroxisome membrane. Its function is as follows. Necessary for early peroxisomal biogenesis. Acts both as a cytosolic chaperone and as an import receptor for peroxisomal membrane proteins (PMPs). Binds and stabilizes newly synthesized PMPs in the cytoplasm by interacting with their hydrophobic membrane-spanning domains, and targets them to the peroxisome membrane by binding to the integral membrane protein PEX3. Excludes CDKN2A from the nucleus and prevents its interaction with MDM2, which results in active degradation of TP53. The chain is Peroxisomal biogenesis factor 19 (PEX19) from Cricetulus griseus (Chinese hamster).